Here is an 83-residue protein sequence, read N- to C-terminus: Retinal cone rhodopsin-sensitive cGMP 3',5'-cyclic phosphodiesterase subunit gamma (83 aa).

The interval 1-51 is disordered; sequence MSDSPCLSPPAPSQGPTTPRKGPPKFKQRQTRQFKSKPPKKGVKGFGDDIP. The span at 22-43 shows a compositional bias: basic residues; that stretch reads GPPKFKQRQTRQFKSKPPKKGV.

It belongs to the rod/cone cGMP-PDE gamma subunit family. In terms of assembly, tetramer composed of two catalytic chains (alpha and beta), and two inhibitory chains (gamma).

It carries out the reaction 3',5'-cyclic GMP + H2O = GMP + H(+). Participates in processes of transmission and amplification of the visual signal. cGMP-PDEs are the effector molecules in G-protein-mediated phototransduction in vertebrate rods and cones. In Rattus norvegicus (Rat), this protein is Retinal cone rhodopsin-sensitive cGMP 3',5'-cyclic phosphodiesterase subunit gamma (Pde6h).